Consider the following 238-residue polypeptide: MKIDVLFYPEKLKNAEDKAVVVLDVLRATTTIATALAAGAEKIYPVSSIKEAFLLKKKISGALLGGERGGIKVPGFDLGNSPLEYQGLKGKTIILSSTNGTKTLKKAVSARTLIAGSIVNAKAVADYLLKLNLDVVLMPSGTDSQFSLEDFAGAGYIISLLAEQKKIELSDQAYVSFELARSNPPEEILTRSFHGQRLINLGFARDVEYCAKLNLLDVVPEGHLQEGRLVIESSRLFR.

It belongs to the ComB family. Requires Mg(2+) as cofactor.

The enzyme catalyses (2R)-O-phospho-3-sulfolactate + H2O = (2R)-3-sulfolactate + phosphate. The protein is Probable 2-phosphosulfolactate phosphatase of Carboxydothermus hydrogenoformans (strain ATCC BAA-161 / DSM 6008 / Z-2901).